A 493-amino-acid polypeptide reads, in one-letter code: Matrilin-1 (493 aa).

The first 23 residues, 1 to 23 (MDGIFCALPLSLLLLLQSCGVWG), serve as a signal peptide directing secretion. The 197-residue stretch at 24-220 (APPQPRGTLC…THKFQEAFCV (197 aa)) folds into the VWFA 1 domain. Residue Asn-74 is glycosylated (N-linked (GlcNAc...) asparagine). The 41-residue stretch at 221 to 261 (VSDLCATGDHDCEQICISTPGSYKCACKEGFTLNNDGKTCS) folds into the EGF-like domain. Cystine bridges form between Cys-225–Cys-236, Cys-232–Cys-245, and Cys-247–Cys-260. The 189-residue stretch at 262–450 (ACSGGSGSAL…GKKLQMKICV (189 aa)) folds into the VWFA 2 domain. Residues 462–492 (KFQTKVEELINTLQQKLEAVAKRIEALENKI) adopt a coiled-coil conformation.

As to quaternary structure, homotrimer. In terms of tissue distribution, expressed in xyphoid cartilage and chondrocytes (at protein level).

It localises to the secreted. Its subcellular location is the extracellular space. The protein resides in the extracellular matrix. Functionally, a major component of the extracellular matrix of non-articular cartilage. Binds to type 2 collagens and forms long concatenated protein networks as part of the extracellular matrix. Required for the network-like organization and bundling of collagen fibrils surrounding chondrocytes in the zones of maturation and hypertrophy. Required for mechanotransduction and adaption to mechanical loading in cartilage chondrocytes, resulting in an increase in expression of the extracellular matrix components ACAN and COL2A1. Acts as a moderator of angiogenesis in response to injury. The polypeptide is Matrilin-1 (Gallus gallus (Chicken)).